The sequence spans 431 residues: Acyl transferase 8 (431 aa).

Residue His169 is the Proton acceptor of the active site. Disordered stretches follow at residues 220 to 247 (VADARGGVRPGVPRPRVLRHERAPRAPA), 260 to 313 (HHAG…DHLR), and 331 to 400 (GLRV…PPPT). Residues 224–234 (RGGVRPGVPRP) are compositionally biased toward low complexity. Positions 264–273 (DGGGGGGGGR) are enriched in gly residues. 2 stretches are compositionally biased toward basic residues: residues 297–306 (ERRRRRRRGR) and 335–380 (GRPR…RRLP). The span at 381 to 394 (QRHDAPRLITERAH) shows a compositional bias: basic and acidic residues.

It belongs to the plant acyltransferase family.

Involved in the incorporation of ferulate into the cell wall. May act as arabinoxylan feruloyl transferase. This chain is Acyl transferase 8, found in Oryza sativa subsp. japonica (Rice).